Here is a 98-residue protein sequence, read N- to C-terminus: Complement inhibitor RaCI2 (98 aa).

The N-terminal stretch at 1 to 21 (MNAVTVLAFTAFALIVHDCYS) is a signal peptide. Intrachain disulfides connect C35-C59, C40-C61, and C55-C76.

This sequence belongs to the RaCI family. Expressed in salivary glands.

Its subcellular location is the secreted. Its function is as follows. Complement inhibitor. Prevents complement-mediated C5 activation by binding to C5. Binds C5 at a different binding site than the other tick complement inhibitors OmCI and CirpT1, and the drug eculizumab. The sequence is that of Complement inhibitor RaCI2 from Rhipicephalus microplus (Cattle tick).